Reading from the N-terminus, the 122-residue chain is Large ribosomal subunit protein uL18 (122 aa).

It belongs to the universal ribosomal protein uL18 family. In terms of assembly, part of the 50S ribosomal subunit; part of the 5S rRNA/L5/L18/L25 subcomplex. Contacts the 5S and 23S rRNAs.

This is one of the proteins that bind and probably mediate the attachment of the 5S RNA into the large ribosomal subunit, where it forms part of the central protuberance. This Synechococcus sp. (strain JA-3-3Ab) (Cyanobacteria bacterium Yellowstone A-Prime) protein is Large ribosomal subunit protein uL18.